Consider the following 3473-residue polypeptide: MQSFLLSSKNQAKLLHAGLEFVGGVRCAHQGWVSGKAVVFCNYCNFAHRLYRFYTKNHCVLNKELLKISVEGLLCHCIEQAFLFRRFYDRRFAWQRKYAKGFLFDNLSIPFDDCALCPNAGTRLSQTGVSHDHFVCNYVEHLFECASFSRETGGKFFRACSEGWHWNATCTTCGASCRFANPRENIVIAIFMNFLRVMYDGNKYYVSLHCDTEWIPVHPLFARLVLMVRGFAPLDNSHVIEEDEMDICGHSSEVTYEDPSKFAFTHQHVTRGVGMGHLAFCRDANGVDRGEHKFYLHGPFDLKMTHAMFRVFMILLNCHGYVQSEFRDEFPDIKDRSLCGLLSVAGLRGVNVSCNEEFIHLHSQFHNGSFRSQRPIPMVYAEPEMYPPLGYVHLTESWVPRGRLLIDDLPSLMSRVYAESSQAQAGEIYEETFDEDDLFELDGEEGTSTRGLLDLGRRLGGLLLGATKCVKGLHSVIEWPVDVLTKEAEDLGTWLADNKKYVSESTWSCQVCPEVQDALEKSMREQAKLNAQMISGIKKLATTMDSATLKLRDNLKELEQRISVLEQGADDTQQVRITNLENFCEDAAKAFEALRNDIEALKKKPAQSVTPLPSPSGNSGTAGEQRPPPRRRRRPPVVEMSEAQAGETVIVGGDEEQEAHQDSSVAAAGPADEHNAMLQKIYLGSFKWKVSDGGGSILKTFSLPSDIWAANDRMKNFLSYFQYYTCEGMTFTLTITSIGLHGGTLLVAWDALSSATRRGIVSMIQLSNLPSMTLHASGSSIGTLTVTSPAIQHQICTSGSEGSLANLGSLVISVANVLCADSASAQELNVNAWVQFNKPKLSYWTAQHSIAQSGGFEESQDLGDLQAIIATGKWSTTSDKNLMEIIVHPTACYVSEKLIYQTNLSVVAHMFAKWSGSMRYTFVFGASMFDRGKIMVSAVPVQFRNSKLTLSQMAAFPSMVCDLSMETREFTFEVPYISIGKMSLVCKDYLFDISSYNADLVVSRLHVMILDPLVKTGNASNSIGFYVVAGPGKGFKLHQMCGVKSQFAHDVLTAQDFGRSLSCSRLLGNGFKEWCSRESLLMRVPLKSGKKRAFKYAVTPRMRTLPPEATSLSWLSQIFVEWRGSLTYTIHVQSGSAIQHSYMRIWYDPNGKTDEKEVKFLDSAHPPAGIKVYHWDLKIGDSFRFTVPYCARTEKLQIPKAYASTPYEWLTMYNGAVTFDLRSGADMELFVSIAGGDDFEMFEQTVPPKCGSVSDSYTVLSYADDVKSVTEVPNKTTYLADEQPTTSAPRTSIVNTEDDPPTEGEIARTTNGTLVQYRGGAWKPMVERTPTMSKKQVGPELTVSDPQMYKCIKNMNKNVKILTDRQCTAKLANIVDSAQELVGSNSTFVEDLAVGAKQIRKFGESLDVFEGSMSAAKTAELIDNTHAAFSGPADGSPISNVVQLLLPMLSSIKGMSGKMESKMASLTAMFQPCKKAITHLIERSFPYLACKGFKTDKWIWAALASILVGAALLHYYRSDLKFVKKWSVMCMIIWAPLLAEKAYHLGTWIKEKFLKSLPRTRTIKDSCRKHSLAGAFECLASASCAYIKDNWAKTMSSLLTILSVVASLVMWGKIPDDKEITSFADKFHSIGKKGRSITNIIGGFEKITSVCKKWSETLVSWIVSNVSGGIPKEDLAMTAYLGFKIHDWVRETRDMALMENRFRGFGGDEHLVKVRRLYGHSLKIDNALMEKQIVPDMQLSLIIKECRQKCLELMNESYTYKGMKQSRIDPLHVCMLGAPGVGKSTIAHVVINHLLDHRGEPEVDRIYTRSCADAYWSNYHQEPVILYDDLGAIKSNLRLSDYAEIMGIKTNDPFSVPMAAVEDKGKHCTSKYVFSCTNVLNLDDTGDVVTKMAYYRRRNVLVKVERDPDVPKNEANPTEGLVFTVLGHDQNCQGDPQFVVKENWDEPFLREVDTEGWRFERVEYRTFLRFLCMYTDAYMYSQEQVLQGIKTFKMNPFAPEPEFAQAQNGEAAECEIVEEMQEVPGEAPQEAKELVKIETAPNMDELVEAFNKLRVTPGHLNDILRDGSGCYIDEWAIAGPRWLSFHELLPFTCGCHHTRVCDFNIVYNNMCKAVRSQSVHFKYRANQAIKYAYTHKLHSQCRYSIDFEKLRECNPLDVFVCVLSKYTADDHSFERRCPKKMNVVRMQRPPVFELKMRPPSDSVVVEDEQGQRIFEWPHLYIFLRYRAIEFKDDKGSLTVREDAGADVCPWNEFLKLPWLDGDQLKSVLPAHLHRMVQARLEQVEIMEENGNYSGEMRNAIAEIKEYLDQDHQWVAALVLVACAVKERRRMTHDKLHRKSFNALDKLDAWYTTTAPKTSKKMKILLAIGASVAVAGVAVGAVILLQKTNLFGSKEDEEIEGEEGETQASGAHESDGIVTQHLKRDIRPKMRVTYTDHHVAEAHEEKDAEKPRKSGNPTRKSYLGLSPGFAERGMGVTYEEHTPLKDALLDESNKVFRRKIVASVESAVKQGGKASKDTVLSQIGDWQDKVKATGVIAARQLEASGSLKKIHNLNSRRTSSHVMPGLVVHDGAFERSDEVDAELHRITIDEVKSCPKMIKEGVSTLSVKKASVGMLALQKAESQLSFPFTSRAGVDRDLSMTNLIDTHMAGMSCIIISELGNVFRTFGVLRLCGTYVCMPAHYLDEITSEHTLYFVCPSKITQIQLERHRVCLVNGFQETVVWDLGPSVPPSRNYIDFIANADDWKNYKATSGALVMSKYSVDSMLQCVHFLDSIELTEANVSVPTSYYEANGGIHTIISGLRYRVHCMPGFCGRAIMRADATCFRKIIGMHVSGLRNKCMGYAETLTQEHLMQAIETLKETGLLKHIPKGAIGAGEEKLPEHSKKQSLSLEGKGNLGIVGQLTAQLVPTSVTKTTICKSMIHGLIGEIKTEPSVLSAWDRRLPFPPGEWDPMKDAVKKYGSYILPFPTEEIQEVENFLIKKFRRKENSRRTRNVNSLEVGINGIDGSDFWSPIEMKTSPGYPYILKRPSGAQGKKYLFEELEPYPSGRPKYAMKDPELIENYERIKEEVTSGVKPSIMTMECLKDERRKLAKIYEKPATRTFTILSPEVNILFRQYFGDFAAMVMSTRREHFSQVGINPESMEWSDLINSLLRVNTKGFAGDYSKFDGIGSPAIYHSIVNVVNAWYNDGEVNARARHSLISSIVHRDGICGDLILRYSQGMPSGFAMTVIFNSFVNYYFMALAWMSTVGSSLLSPQGSCKDFDTYCKIVAYGDDNVVSVHEEFLDVYNLQTVAAYLSHFGVTYTDGDKNPIHMSKPYEDITKMSFLKRGFERVESSGFLWKAPLDKTSIEERLNWIRDCPTPVEALEQNIESALHEAAIHGRDYFDDLVRRLNSALTRVMLPPTDISFEECQARWWASVTGALRAADYTSLVRRASSGHVEFNKKYRDMFRQQDLPLKEILMKSKPVALLDLEV.

The stretch at 514–604 forms a coiled coil; the sequence is EVQDALEKSM…RNDIEALKKK (91 aa). Disordered stretches follow at residues 602–644 and 1278–1306; these read KKKP…SEAQ and YLAD…EGEI. Polar residues-rich tracts occupy residues 607-622 and 1278-1295; these read QSVT…SGTA and YLAD…SIVN. The next 2 membrane-spanning stretches (helical) occupy residues 1496–1516 and 1595–1615; these read DKWI…LHYY and MSSL…GKIP. The region spanning 1751–1917 is the SF3 helicase domain; the sequence is LELMNESYTY…PDVPKNEANP (167 aa). Residue 1777–1784 coordinates ATP; it reads GAPGVGKS. A helical membrane pass occupies residues 2363–2383; the sequence is ILLAIGASVAVAGVAVGAVIL. The span at 2394–2404 shows a compositional bias: acidic residues; that stretch reads EDEEIEGEEGE. 2 disordered regions span residues 2394-2415 and 2438-2465; these read EDEE…ESDG and VAEA…LGLS. Residues 2438-2451 show a composition bias toward basic and acidic residues; the sequence is VAEAHEEKDAEKPR. The Peptidase C3 domain maps to 2632-2850; it reads GVDRDLSMTN…YAETLTQEHL (219 aa). Catalysis depends on for picornain 3C-like protease activity residues His-2680, Glu-2717, and Cys-2811. The RdRp catalytic domain occupies 3155 to 3286; sequence TKGFAGDYSK…SVHEEFLDVY (132 aa).

Post-translationally, specific enzymatic cleavages by picornain 3C-like protease in vivo yield mature proteins. Picornain 3C-like protease is autocatalytically processed.

It localises to the virion. It is found in the host membrane. The catalysed reaction is RNA(n) + a ribonucleoside 5'-triphosphate = RNA(n+1) + diphosphate. Picornain 3C-like protease is a thiol protease that probably cleaves the polyprotein. The sequence is that of Genome polyprotein from Oryza sativa (Rice).